Consider the following 119-residue polypeptide: Phosphoribosyl-AMP cyclohydrolase (119 aa).

Aspartate 77 contributes to the Mg(2+) binding site. Cysteine 78 provides a ligand contact to Zn(2+). Mg(2+) contacts are provided by aspartate 79 and aspartate 81. Zn(2+) is bound by residues cysteine 94 and cysteine 101.

This sequence belongs to the PRA-CH family. As to quaternary structure, homodimer. Mg(2+) is required as a cofactor. Requires Zn(2+) as cofactor.

The protein resides in the cytoplasm. The catalysed reaction is 1-(5-phospho-beta-D-ribosyl)-5'-AMP + H2O = 1-(5-phospho-beta-D-ribosyl)-5-[(5-phospho-beta-D-ribosylamino)methylideneamino]imidazole-4-carboxamide. Its pathway is amino-acid biosynthesis; L-histidine biosynthesis; L-histidine from 5-phospho-alpha-D-ribose 1-diphosphate: step 3/9. Catalyzes the hydrolysis of the adenine ring of phosphoribosyl-AMP. In Ruegeria pomeroyi (strain ATCC 700808 / DSM 15171 / DSS-3) (Silicibacter pomeroyi), this protein is Phosphoribosyl-AMP cyclohydrolase.